A 188-amino-acid chain; its full sequence is Large ribosomal subunit protein eL18 (188 aa).

The interval 147-188 is disordered; it reads EAEKHFGPAPGVPHSHTKPYVRSKGRKFERARGRRASRAYKN. Basic residues-rich tracts occupy residues 161 to 171 and 178 to 188; these read SHTKPYVRSKG and RGRRASRAYKN.

This sequence belongs to the eukaryotic ribosomal protein eL18 family.

Its subcellular location is the cytoplasm. This chain is Large ribosomal subunit protein eL18 (rpl-18), found in Caenorhabditis elegans.